The following is a 146-amino-acid chain: Hemoglobin cathodic subunit beta (146 aa).

The Globin domain occupies 2–146 (HFSDAERDAI…VAAALSSRYF (145 aa)). Heme b-binding residues include His-63 and His-92.

It belongs to the globin family. Heterotetramer of two alpha chains and two beta chains. Red blood cells.

In terms of biological role, involved in oxygen transport from gills to the various peripheral tissues. This chain is Hemoglobin cathodic subunit beta (hbb), found in Hoplosternum littorale (Hassar).